A 48-amino-acid polypeptide reads, in one-letter code: Delta-actitoxin-Bcg1c (48 aa).

3 disulfides stabilise this stretch: C4/C45, C6/C35, and C28/C46.

The protein localises to the secreted. It localises to the nematocyst. Binds specifically to voltage-gated sodium channels SCN1A/Nav1.1, thereby delaying their inactivation during signal transduction. In Bunodosoma cangicum (Sea anemone), this protein is Delta-actitoxin-Bcg1c.